The chain runs to 254 residues: Membrane protein US20 (254 aa).

A run of 7 helical transmembrane segments spans residues 31–51, 62–82, 89–109, 114–134, 143–163, 178–198, and 208–228; these read AIFI…WLGF, YSFF…YTLG, ATVL…FQMC, VLVG…GLAF, WKCI…LALL, AFSI…VIFF, and AVCL…MLSG.

The protein resides in the host membrane. This Homo sapiens (Human) protein is Membrane protein US20 (US20).